We begin with the raw amino-acid sequence, 92 residues long: uncharacterized protein (92 aa).

3 helical membrane-spanning segments follow: residues 1–21 (MNIYVWLFAIIALSFSALVGL), 30–50 (ANVLVGESIITVVAGTLIVVI), and 62–82 (IALAIFICGVVGAFAFCKVIG).

It to M.thermoautotrophicum MTH1250.

The protein resides in the cell membrane. This is an uncharacterized protein from Methanocaldococcus jannaschii (strain ATCC 43067 / DSM 2661 / JAL-1 / JCM 10045 / NBRC 100440) (Methanococcus jannaschii).